The primary structure comprises 428 residues: MTQAFQKVSAIRGMNDVLPGPSAQWERFEEIVRAWLQGYGYRNVRTPILEQTRLFTRGIGEVTDIVEKEMYTFTDALNGESLTMRPEMTAGVVRAAIEHNMLYERPHRVYSIGPVFRHERPQRGRYRQFHQIDVEALGFAGPDIDAELIVMLGRLWNTLGLADIRLELNSLGQPAERAAHRAALIEYLEKHVDILDEDGKRRLYTNPLRVLDTKNPALQEMANAAPRLFDFLGEASRAHFDGVCQRLDDAGIGYSLNPRLVRGLDYYNLTVFEWVTDRLGSQGTVCGGGRYDGLIELLGGKPAPAVGFAIGVERLLDLWEQSAGQQTPPECEVYVVHQGEGAQRLAARVGEDLRDAGLSVIVHAGAASFKSQFKRADASGARVAVILGDDEVATKTASVKYLRADAAGEGAQDKVALATLASVLKSKG.

It belongs to the class-II aminoacyl-tRNA synthetase family. In terms of assembly, homodimer.

Its subcellular location is the cytoplasm. It catalyses the reaction tRNA(His) + L-histidine + ATP = L-histidyl-tRNA(His) + AMP + diphosphate + H(+). The sequence is that of Histidine--tRNA ligase from Bordetella avium (strain 197N).